The sequence spans 112 residues: Protein new-glue 2 (112 aa).

The N-terminal stretch at 1–24 (MKITVVLVLLATFLGCVMIHESEA) is a signal peptide. Low complexity predominate over residues 24–69 (ASTTTTSTSASATTTTSASATTTTSASATTTTSASATTTTASPSSS). Positions 24-112 (ASTTTTSTSA…RSSRNRRSEE (89 aa)) are disordered. 4 repeat units span residues 31 to 38 (TSASATTT), 39 to 46 (TSASATTT), 47 to 54 (TSASATTT), and 55 to 62 (TSASATTT). The segment at 31 to 62 (TSASATTTTSASATTTTSASATTTTSASATTT) is 4 X 8 AA tandem repeats of T-S-A-S-A-T-T-T. The segment covering 70–112 (SKKKTVTHYKRKVKRPKKVRKITRRRGLRSRNGRSSRNRRSEE) has biased composition (basic residues).

The protein to NG-1, also to SGS-3. In terms of tissue distribution, salivary gland specific.

The protein localises to the secreted. This chain is Protein new-glue 2 (ng2), found in Drosophila melanogaster (Fruit fly).